Here is a 474-residue protein sequence, read N- to C-terminus: Transmembrane transporter FVEG_12640 (474 aa).

Residues 1 to 15 (MASPTISSMEQYTPS) are compositionally biased toward polar residues. The segment at 1–39 (MASPTISSMEQYTPSSKDEKIVPLHGDAAGSDTEKGESR) is disordered. A run of 10 helical transmembrane segments spans residues 72-92 (ILAI…LCIV), 133-153 (LVGV…IVTS), 164-184 (GTCT…FSSI), 192-212 (WLTW…VVAV), 231-251 (WAPI…NIFI), 275-295 (ACLV…LVIY), 317-337 (VAYG…QHVA), 364-384 (LGIN…VPIL), 387-407 (LLGL…PALL), and 431-451 (LIMI…AVLI).

Belongs to the amino acid/polyamine transporter 2 family.

The protein localises to the membrane. Its function is as follows. Transmembrane transporter; part of the Fusarium detoxification of benzoxazolinone cluster 2 (FDB2) involved in the degradation of benzoxazolinones produced by the host plant. Maize, wheat, and rye produce the 2 benzoxazinone phytoanticipins 2,4-dihy-droxy-7-methoxy-1,4-benzoxazin-3-one (DIMBOA) and 2,4-dihydroxy-1,4-benzoxazin-3-one (DIBOA) that, due to their inherent instability once released, spontaneously degrade to the more stable corresponding benzoxazolinones, 6-methoxy-2-benzoxazolinone (MBOA) and 2-benzoxazolinone (BOA), respectively. Might be involved in the transport of metabolites of benzoxazolinone degradation. This is Transmembrane transporter FVEG_12640 from Gibberella moniliformis (strain M3125 / FGSC 7600) (Maize ear and stalk rot fungus).